The following is a 409-amino-acid chain: 5-aminolevulinate synthase (409 aa).

The succinyl-CoA site is built by R21, S137, and K156. Positions 189, 217, and 245 each coordinate pyridoxal 5'-phosphate. The active site involves K248. K248 is subject to N6-(pyridoxal phosphate)lysine. The pyridoxal 5'-phosphate site is built by S277 and T278. Succinyl-CoA is bound at residue T365.

This sequence belongs to the class-II pyridoxal-phosphate-dependent aminotransferase family. As to quaternary structure, homodimer. Pyridoxal 5'-phosphate serves as cofactor.

The enzyme catalyses succinyl-CoA + glycine + H(+) = 5-aminolevulinate + CO2 + CoA. It functions in the pathway porphyrin-containing compound metabolism; protoporphyrin-IX biosynthesis; 5-aminolevulinate from glycine: step 1/1. The sequence is that of 5-aminolevulinate synthase (hemA) from Rhodobacter capsulatus (strain ATCC BAA-309 / NBRC 16581 / SB1003).